A 93-amino-acid chain; its full sequence is YcgL domain-containing protein Shew_2183 (93 aa).

The region spanning 1–85 (MICAVYKSRL…PPVNLLEEYK (85 aa)) is the YcgL domain.

This chain is YcgL domain-containing protein Shew_2183, found in Shewanella loihica (strain ATCC BAA-1088 / PV-4).